Consider the following 343-residue polypeptide: MDNLDQLVQQAQADFAGVSDSAQLEQAKARYLGKSGALTEQLKGLGKLPPEEKREAGAAINRAKTAIEAALEARRNALREAALLAQLAAEALDVTLPGRGAQGGGLHPVSRTLERIEMLFRSIGFIVADGPEIETDWHNFTALNTPENHPARSMHDTFYLEGRDDVLLRTHTSPVQIRTMLAHVKRHAEAAAMPEIRVIIPGRVYRVDSDATHSPMFHQVEGLWVGEKVSFADLKGVIADFLRKFFETEDLQVRFRPSFFPFTEPSAEIDVAFMSGPLKGRWLEIAGCGMVHPNVLRFGGVDPERYTGFAFGMGPDRLTMLRYGVNDLRLFFEGDLRFLSQFR.

Glutamate 264 contacts Mg(2+).

The protein belongs to the class-II aminoacyl-tRNA synthetase family. Phe-tRNA synthetase alpha subunit type 1 subfamily. In terms of assembly, tetramer of two alpha and two beta subunits. Mg(2+) serves as cofactor.

It is found in the cytoplasm. The catalysed reaction is tRNA(Phe) + L-phenylalanine + ATP = L-phenylalanyl-tRNA(Phe) + AMP + diphosphate + H(+). The chain is Phenylalanine--tRNA ligase alpha subunit from Azoarcus sp. (strain BH72).